The primary structure comprises 2380 residues: DNA polymerase epsilon catalytic subunit A (2380 aa).

Residues 169–196 (YYNKGNNNNNNHQNYNNNNNQNNNNFNK) are compositionally biased toward low complexity. Disordered regions lie at residues 169–209 (YYNK…NNSK), 1178–1210 (FFEK…QQTD), 1766–1787 (KNTS…NDTT), 1967–1998 (QQQQ…KNKK), and 2059–2120 (KIST…TTTS). Over residues 1183–1201 (EDNDQDNDNDNDNDNDNDN) the composition is skewed to acidic residues. The segment covering 1767 to 1776 (NTSNNSNTKN) has biased composition (low complexity). The segment covering 1777–1787 (GANQNTTNDTT) has biased composition (polar residues). Residues 1975–1991 (NADDDDDDDVSENEEEQ) are compositionally biased toward acidic residues. 2 stretches are compositionally biased toward low complexity: residues 2059 to 2081 (KIST…TTKD) and 2110 to 2120 (SSSSSTTTTTS). Positions 2225 and 2228 each coordinate Zn(2+). A CysA-type zinc finger spans residues 2225–2288 (CSSCHSCRDI…RVPELSCIQC (64 aa)). The span at 2245–2258 (ISSRLSSQQKSNNN) shows a compositional bias: low complexity. Residues 2245–2275 (ISSRLSSQQKSNNNDSDDSDDDNEENEGDDD) form a disordered region. Acidic residues predominate over residues 2259 to 2275 (DSDDSDDDNEENEGDDD). The Zn(2+) site is built by C2285 and C2288. Residues C2319, C2322, C2334, and C2337 each coordinate [4Fe-4S] cluster. Residues 2319–2337 (CSKCNDVKSDNLGDICPQC) carry the CysB motif motif.

The protein belongs to the DNA polymerase type-B family. In terms of assembly, consists of three subunits: pole, pole2 and pole3. The cofactor is [4Fe-4S] cluster.

Its subcellular location is the nucleus. It catalyses the reaction DNA(n) + a 2'-deoxyribonucleoside 5'-triphosphate = DNA(n+1) + diphosphate. DNA polymerase II participates in chromosomal DNA replication. This Dictyostelium discoideum (Social amoeba) protein is DNA polymerase epsilon catalytic subunit A (pole).